The chain runs to 273 residues: 4-hydroxy-tetrahydrodipicolinate reductase (273 aa).

Residues 12–17 and glutamate 38 each bind NAD(+); that span reads GAGGRM. Residue arginine 39 participates in NADP(+) binding. NAD(+)-binding positions include 102–104 and 126–129; these read GTT and AANF. Histidine 159 (proton donor/acceptor) is an active-site residue. Histidine 160 is a binding site for (S)-2,3,4,5-tetrahydrodipicolinate. Residue lysine 163 is the Proton donor of the active site. 169–170 is a (S)-2,3,4,5-tetrahydrodipicolinate binding site; it reads GT.

Belongs to the DapB family. Homotetramer.

The protein localises to the cytoplasm. The enzyme catalyses (S)-2,3,4,5-tetrahydrodipicolinate + NAD(+) + H2O = (2S,4S)-4-hydroxy-2,3,4,5-tetrahydrodipicolinate + NADH + H(+). The catalysed reaction is (S)-2,3,4,5-tetrahydrodipicolinate + NADP(+) + H2O = (2S,4S)-4-hydroxy-2,3,4,5-tetrahydrodipicolinate + NADPH + H(+). Its pathway is amino-acid biosynthesis; L-lysine biosynthesis via DAP pathway; (S)-tetrahydrodipicolinate from L-aspartate: step 4/4. Catalyzes the conversion of 4-hydroxy-tetrahydrodipicolinate (HTPA) to tetrahydrodipicolinate. The polypeptide is 4-hydroxy-tetrahydrodipicolinate reductase (Escherichia coli O157:H7).